The chain runs to 317 residues: Zinc finger protein CRM3 (317 aa).

A compositionally biased stretch (low complexity) spans 1-15 (MNFSLSKQSSEKQSS). Residues 1-22 (MNFSLSKQSSEKQSSYTDKSRS) are disordered. C2H2-type zinc fingers lie at residues 254 to 276 (KQCP…YLIH) and 282 to 306 (FKCT…LKSH).

It is found in the nucleus. Its function is as follows. Probable transcription factor involved in the regulation of the transcription of genes involved in cell rescue and defense, as well as cell cycle and DNA processing. This chain is Zinc finger protein CRM3, found in Saccharomyces cerevisiae (strain ATCC 204508 / S288c) (Baker's yeast).